Reading from the N-terminus, the 418-residue chain is Serine proteinase inhibitor 2.4 (418 aa).

An N-terminal signal peptide occupies residues 1-28 (MAFIAALGIFMAGICPAVLCFPNGTLGR). N-linked (GlcNAc...) asparagine glycosylation is found at asparagine 23, asparagine 38, asparagine 104, and asparagine 269.

This sequence belongs to the serpin family.

Its subcellular location is the secreted. In Apodemus sylvaticus (European woodmouse), this protein is Serine proteinase inhibitor 2.4.